Reading from the N-terminus, the 298-residue chain is Hydroxymethylglutaryl-CoA lyase, mitochondrial (298 aa).

The 268-residue stretch at 6 to 273 (VKVVEVGPRD…HTGVDLQKLM (268 aa)) folds into the Pyruvate carboxyltransferase domain. Arg-14 is a substrate binding site. Residue Asp-15 participates in a divalent metal cation binding. Lys-21 carries the post-translational modification N6-acetyllysine. Residues His-206 and His-208 each contribute to the a divalent metal cation site. Residue Cys-239 is part of the active site. Asn-248 is a binding site for a divalent metal cation. The Microbody targeting signal motif lies at 296–298 (CRL).

This sequence belongs to the HMG-CoA lyase family. Homodimer; disulfide-linked. Can also form homotetramers.

It is found in the mitochondrion matrix. The protein resides in the peroxisome. The catalysed reaction is (3S)-3-hydroxy-3-methylglutaryl-CoA = acetoacetate + acetyl-CoA. The protein operates within metabolic intermediate metabolism; (S)-3-hydroxy-3-methylglutaryl-CoA degradation; acetoacetate from (S)-3-hydroxy-3-methylglutaryl-CoA: step 1/1. In terms of biological role, mitochondrial 3-hydroxy-3-methylglutaryl-CoA lyase that catalyzes a cation-dependent cleavage of (S)-3-hydroxy-3-methylglutaryl-CoA into acetyl-CoA and acetoacetate, a key step in ketogenesis. Terminal step in leucine catabolism. Ketone bodies (beta-hydroxybutyrate, acetoacetate and acetone) are essential as an alternative source of energy to glucose, as lipid precursors and as regulators of metabolism. The chain is Hydroxymethylglutaryl-CoA lyase, mitochondrial (HMGCL) from Gallus gallus (Chicken).